We begin with the raw amino-acid sequence, 232 residues long: uncharacterized protein (232 aa).

A compositionally biased stretch (basic and acidic residues) spans 86-95; the sequence is RGLPRPEFKA. Positions 86 to 107 are disordered; the sequence is RGLPRPEFKANGHPSMDAEADD.

This is an uncharacterized protein from Sinorhizobium fredii (strain NBRC 101917 / NGR234).